The chain runs to 141 residues: Flagellar assembly factor FliW (141 aa).

It belongs to the FliW family. As to quaternary structure, interacts with translational regulator CsrA and flagellin(s).

The protein localises to the cytoplasm. Acts as an anti-CsrA protein, binds CsrA and prevents it from repressing translation of its target genes, one of which is flagellin. Binds to flagellin and participates in the assembly of the flagellum. This chain is Flagellar assembly factor FliW, found in Clostridium botulinum (strain Alaska E43 / Type E3).